Here is a 290-residue protein sequence, read N- to C-terminus: MKRVGAHVSIAGGVENAPLQASKIGAKAFALFTKNQRQWKSPELAALSIETFRRNCCDGGFRPEHILPHDSYLINLGSPEPDKLDRSRNAFFDEMQRVERLGLKMLNFHPGSHLNQIEPDACLQLIAESVNMALDRSCCVTAVIENTAGQGTNLGRSFDDLACIIDHVEDKSRVGVCLDTCHLFAGGYDIRTKEALDRTLDEFDRIVGIRYLKAMHLNDAKQPLGSRLDRHECIGKGAIGIEAFTAIMQHPLLDELPLILETPDSDGWQEEIGLLYRLAEEQVKDVSTPP.

Residues His-69, His-109, Glu-145, Asp-179, His-182, His-216, Asp-229, His-231, and Glu-261 each coordinate Zn(2+).

This sequence belongs to the AP endonuclease 2 family. It depends on Zn(2+) as a cofactor.

The catalysed reaction is Endonucleolytic cleavage to 5'-phosphooligonucleotide end-products.. Functionally, endonuclease IV plays a role in DNA repair. It cleaves phosphodiester bonds at apurinic or apyrimidinic (AP) sites, generating a 3'-hydroxyl group and a 5'-terminal sugar phosphate. This is Probable endonuclease 4 from Chlorobium limicola (strain DSM 245 / NBRC 103803 / 6330).